The primary structure comprises 97 residues: Na(+)/H(+) antiporter subunit F1 (97 aa).

A run of 3 helical transmembrane segments spans residues 3–23 (FKIFIITALIIVVLSMLAMLI), 35–55 (VVALDAIGLQLMAVIALFSIL), and 60–80 (YMLVVILMVGILAFLGTAVFS).

This sequence belongs to the CPA3 antiporters (TC 2.A.63) subunit F family. As to quaternary structure, may form a heterooligomeric complex that consists of seven subunits: mnhA1, mnhB1, mnhC1, mnhD1, mnhE1, mnhF1 and mnhG1.

It localises to the cell membrane. Mnh complex is a Na(+)/H(+) antiporter involved in Na(+) excretion. This is Na(+)/H(+) antiporter subunit F1 (mnhF1) from Staphylococcus epidermidis (strain ATCC 35984 / DSM 28319 / BCRC 17069 / CCUG 31568 / BM 3577 / RP62A).